Reading from the N-terminus, the 543-residue chain is 2-succinyl-5-enolpyruvyl-6-hydroxy-3-cyclohexene-1-carboxylate synthase (543 aa).

It belongs to the TPP enzyme family. MenD subfamily. In terms of assembly, homodimer. The cofactor is Mg(2+). Requires Mn(2+) as cofactor. Thiamine diphosphate serves as cofactor.

It catalyses the reaction isochorismate + 2-oxoglutarate + H(+) = 5-enolpyruvoyl-6-hydroxy-2-succinyl-cyclohex-3-ene-1-carboxylate + CO2. It functions in the pathway quinol/quinone metabolism; 1,4-dihydroxy-2-naphthoate biosynthesis; 1,4-dihydroxy-2-naphthoate from chorismate: step 2/7. The protein operates within quinol/quinone metabolism; menaquinone biosynthesis. Catalyzes the thiamine diphosphate-dependent decarboxylation of 2-oxoglutarate and the subsequent addition of the resulting succinic semialdehyde-thiamine pyrophosphate anion to isochorismate to yield 2-succinyl-5-enolpyruvyl-6-hydroxy-3-cyclohexene-1-carboxylate (SEPHCHC). The polypeptide is 2-succinyl-5-enolpyruvyl-6-hydroxy-3-cyclohexene-1-carboxylate synthase (Corynebacterium glutamicum (strain R)).